A 465-amino-acid chain; its full sequence is MSNKMWGGRFSERPDEIMEEINVSIDVDRHLYAQDIAASKAHAAMLATQGIITASDAKNIGKGLDTILSEIGKGGFTFKRALEDIHMNVESRLSELIGPAAGRLHTARSRNDQVATDFRLYVRDVIDETDAALAAFQQALVARALEHAGTVMPGFTHLQTAQPVTFGHHLLAYVEMAARDRGRFQDARKRLNESPLGAAALAGTSFPIDRHATAKALLFDRPMANSLDAVSDRDFVLETLSAASICAVHMSRFAEEIVIWTSPLVGLIRLSDKFTTGSSIMPQKRNPDAAELVRAKTGRVIGALNGLLIVMKGLPLAYQKDMQEDKQGAMEGFAALSLAIRAMTGMVRDLAPDEAKMKAAAGEGYATATDLADWLVRTLKMPFREAHHVTGRIVAKAAEGGVALHELPLKEMQAIEPRITKDVLGVLSVESSVKSRTSFGGTAPKNVASQAKSWAKRLEKERKLG.

The protein belongs to the lyase 1 family. Argininosuccinate lyase subfamily.

It localises to the cytoplasm. It carries out the reaction 2-(N(omega)-L-arginino)succinate = fumarate + L-arginine. It participates in amino-acid biosynthesis; L-arginine biosynthesis; L-arginine from L-ornithine and carbamoyl phosphate: step 3/3. The chain is Argininosuccinate lyase from Bradyrhizobium diazoefficiens (strain JCM 10833 / BCRC 13528 / IAM 13628 / NBRC 14792 / USDA 110).